The following is a 292-amino-acid chain: Ribosomal protein L11 methyltransferase (292 aa).

The S-adenosyl-L-methionine site is built by T144, G165, D187, and N229.

Belongs to the methyltransferase superfamily. PrmA family.

Its subcellular location is the cytoplasm. It carries out the reaction L-lysyl-[protein] + 3 S-adenosyl-L-methionine = N(6),N(6),N(6)-trimethyl-L-lysyl-[protein] + 3 S-adenosyl-L-homocysteine + 3 H(+). In terms of biological role, methylates ribosomal protein L11. The protein is Ribosomal protein L11 methyltransferase of Pseudomonas fluorescens (strain ATCC BAA-477 / NRRL B-23932 / Pf-5).